Reading from the N-terminus, the 1001-residue chain is Kinesin-like protein KIN-14P (1001 aa).

In terms of domain architecture, Calponin-homology (CH) spans 53–172 (AIRRYEAANW…CVLSLRSFSE (120 aa)). Positions 284 to 300 (NESVKHALDPNDDKLLS) are enriched in basic and acidic residues. Positions 284 to 322 (NESVKHALDPNDDKLLSRADTPPEMESTCTCSTGNMDEE) are disordered. The 323-residue stretch at 426–748 (NIRVYCRVRP…LKFAERVATV (323 aa)) folds into the Kinesin motor domain. Residue 509–516 (GQTGSGKT) participates in ATP binding. A coiled-coil region spans residues 756 to 784 (NKEGGEVKELKEQIACLKAALAKKDGETE). 2 disordered regions span residues 804 to 830 (PPAF…QKKR) and 890 to 1001 (EPQW…SAKK). Over residues 972 to 984 (PSASTKNGKQLSL) the composition is skewed to polar residues.

It belongs to the TRAFAC class myosin-kinesin ATPase superfamily. Kinesin family. KIN-14 subfamily.

In Oryza sativa subsp. japonica (Rice), this protein is Kinesin-like protein KIN-14P.